The chain runs to 98 residues: Aspartyl/glutamyl-tRNA(Asn/Gln) amidotransferase subunit C (98 aa).

Belongs to the GatC family. In terms of assembly, heterotrimer of A, B and C subunits.

It carries out the reaction L-glutamyl-tRNA(Gln) + L-glutamine + ATP + H2O = L-glutaminyl-tRNA(Gln) + L-glutamate + ADP + phosphate + H(+). The enzyme catalyses L-aspartyl-tRNA(Asn) + L-glutamine + ATP + H2O = L-asparaginyl-tRNA(Asn) + L-glutamate + ADP + phosphate + 2 H(+). Its function is as follows. Allows the formation of correctly charged Asn-tRNA(Asn) or Gln-tRNA(Gln) through the transamidation of misacylated Asp-tRNA(Asn) or Glu-tRNA(Gln) in organisms which lack either or both of asparaginyl-tRNA or glutaminyl-tRNA synthetases. The reaction takes place in the presence of glutamine and ATP through an activated phospho-Asp-tRNA(Asn) or phospho-Glu-tRNA(Gln). This is Aspartyl/glutamyl-tRNA(Asn/Gln) amidotransferase subunit C from Acidothermus cellulolyticus (strain ATCC 43068 / DSM 8971 / 11B).